Consider the following 284-residue polypeptide: Homeobox protein six1 (284 aa).

Residues 124 to 183 (GEETSYCFKEKSRGVLREWYAHNPYPSPREKRELAEATGLTTTQVSNWFKNRRQRDRAAE) constitute a DNA-binding region (homeobox). Positions 168-230 (VSNWFKNRRQ…SPPQSPDQNS (63 aa)) are disordered. Basic and acidic residues predominate over residues 179–190 (DRAAEAKERENT). The span at 191–202 (ENNNTSTNKQNQ) shows a compositional bias: low complexity.

This sequence belongs to the SIX/Sine oculis homeobox family.

The protein resides in the nucleus. It localises to the cytoplasm. Transcription factor that is involved in the regulation of cell proliferation, apoptosis and embryonic development. Depending on context, functions as a transcriptional repressor or activator. Required for the normal formation of pre-placodal ectoderm. This Xenopus laevis (African clawed frog) protein is Homeobox protein six1 (six1).